The chain runs to 362 residues: Cationic peroxidase SPC4 (362 aa).

An N-terminal signal peptide occupies residues 1 to 31; that stretch reads MSRAPTLAAAAAVAAVVLICSSSTATAADGN. 4 cysteine pairs are disulfide-bonded: Cys-50-Cys-131, Cys-83-Cys-88, Cys-138-Cys-333, and Cys-218-Cys-245. His-81 (proton acceptor) is an active-site residue. 5 residues coordinate Ca(2+): Asp-82, Val-85, Gly-87, Asp-89, and Ser-91. Residue Asn-109 is glycosylated (N-linked (GlcNAc...) asparagine). Thr-111 is a (indol-3-yl)acetate binding site. Pro-181 contacts substrate. Residue His-211 coordinates heme b. Thr-212 provides a ligand contact to Ca(2+). Asn-234 is a glycosylation site (N-linked (GlcNAc...) asparagine). Ca(2+)-binding residues include Asp-257, Thr-260, Ala-263, and Asp-265. An N-linked (GlcNAc...) asparagine glycan is attached at Asn-332.

Belongs to the peroxidase family. Classical plant (class III) peroxidase subfamily. As to quaternary structure, monomer. Heme b serves as cofactor. It depends on Ca(2+) as a cofactor. The proportions of glycoforms I and II are 35% and 65% respectively. As to expression, present in germinated and ungerminated grain, seedlings, and leaves and stem of the mature plant.

It is found in the secreted. It carries out the reaction 2 a phenolic donor + H2O2 = 2 a phenolic radical donor + 2 H2O. Removal of H(2)O(2), oxidation of toxic reductants, biosynthesis and degradation of lignin, suberization, auxin catabolism, response to environmental stresses such as wounding, pathogen attack and oxidative stress. These functions might be dependent on each isozyme/isoform in each plant tissue. Has a high preference for hydroxycinnamates as substrates. Substrate preference is ferulic acid &gt; p-coumaric acid &gt; N-acetyl tyrosine methyl ester &gt; N-acetyl-tyrosine &gt; tyrosine &gt; catechol &gt; Gly-Tyr-Gly. May be involved in the formation of diferulate linkages in the plant cell wall. This is Cationic peroxidase SPC4 from Sorghum bicolor (Sorghum).